Consider the following 448-residue polypeptide: 4-hydroxybenzoate transporter PcaK (448 aa).

The Cytoplasmic segment spans residues 1–30; sequence MNQAQNSVGKSLDVQSFINQQPLSRYQWRV. The chain crosses the membrane as a helical span at residues 31–51; that stretch reads VLLCFLIVFLDGLDTAAMGFI. At 52–67 the chain is on the periplasmic side; sequence APALSQEWGIDRASLG. A helical transmembrane segment spans residues 68-88; sequence PVMSAALIGMVFGALGSGPLA. The Cytoplasmic segment spans residues 89-94; that stretch reads DRFGRK. Residues 95-115 form a helical membrane-spanning segment; the sequence is GVLVGAVLVFGGFSLASAYAT. At 116–119 the chain is on the periplasmic side; it reads NVDQ. Residues 120 to 140 form a helical membrane-spanning segment; it reads LLVLRFLTGLGLGAGMPNATT. Residues 141–152 lie on the Cytoplasmic side of the membrane; sequence LLSEYTPERLKS. The chain crosses the membrane as a helical span at residues 153 to 173; it reads LLVTSMFCGFNLGMAGGGFIS. The Periplasmic portion of the chain corresponds to 174 to 184; sequence AKMIPAYGWHS. Residues 185 to 205 form a helical membrane-spanning segment; the sequence is LLVIGGVLPLLLALVLMVWLP. The Cytoplasmic segment spans residues 206–261; it reads ESARFLVVRNRGTDKIRKTLSPIAPQVVAEAGSFSVPEQKAVAARSVFAVIFSGTY. The helical transmembrane segment at 262–282 threads the bilayer; that stretch reads GLGTMLLWLTYFMGLVIVYLL. Residues 283–301 lie on the Periplasmic side of the membrane; the sequence is TSWLPTLMRDSGASMEQAA. A helical membrane pass occupies residues 302–322; that stretch reads FIGALFQFGGVLSAVGVGWAM. Residues 323–329 lie on the Cytoplasmic side of the membrane; sequence DRYNPHK. The helical transmembrane segment at 330–350 threads the bilayer; that stretch reads VIGIFYLLAGVFAYAVGQSLG. A topological domain (periplasmic) is located at residue Asn-351. The chain crosses the membrane as a helical span at residues 352–372; that stretch reads ITVLATLVLIAGMCVNGAQSA. Residues 373–398 lie on the Cytoplasmic side of the membrane; it reads MPSLAARFYPTQGRATGVSWMLGIGR. The chain crosses the membrane as a helical span at residues 399-419; that stretch reads FGAILGAWSGATLLGLGWNFE. The Periplasmic segment spans residues 420-421; that stretch reads QV. A helical membrane pass occupies residues 422 to 442; that stretch reads LTALLVPAALATVGVIVKGLV. Residues 443–448 lie on the Cytoplasmic side of the membrane; it reads SHADAT.

This sequence belongs to the major facilitator superfamily. Aromatic acid:H(+) symporter (AAHS) (TC 2.A.1.15) family.

It is found in the cell inner membrane. In terms of biological role, transports 4-hydroxybenzoate (4-HBA) and protocatechuate across the membrane. Driven by the proton motive force. Also functions as a chemoreceptor, which is required for chemotaxis to aromatic acids. The sequence is that of 4-hydroxybenzoate transporter PcaK (pcaK) from Pseudomonas putida (Arthrobacter siderocapsulatus).